The following is a 337-amino-acid chain: MSQHPLRPAGSRPGDSPPDGSCPDGLAGGGSAVGGGGGGEAGPGAAGADDLVIAGRAYGSRLLIGTGKFASHRVMRDSLVASGATIVTVALRRVDIGRIGDGDVLDFIPPSMTLLPNTSGAVDAAEALRLARLGRAATGTGLVKLEVTPDPRTLAPDPLETLRAAELMVADGFTVLPYCSADPVLARRLEEVGCATVMPLGSWIGSNRGLRTRDAIEAIVASAGVPVVVDAGLGVPSDAAEAMEIGAAAVLVNTAIAVAADPARMARAFALATAAGRLGFLAGRGAAGPATVASASSPLTGFLGAHPSPASHPSPASPVPSVSRATSPAAVVGEASR.

The disordered stretch occupies residues 1–41 (MSQHPLRPAGSRPGDSPPDGSCPDGLAGGGSAVGGGGGGEA). Residues 10-25 (GSRPGDSPPDGSCPDG) show a composition bias toward low complexity. Positions 26-41 (LAGGGSAVGGGGGGEA) are enriched in gly residues. Lys-144 acts as the Schiff-base intermediate with DXP in catalysis. 1-deoxy-D-xylulose 5-phosphate is bound by residues Gly-205, 231–232 (AG), and 253–254 (NT). The interval 302-337 (FLGAHPSPASHPSPASPVPSVSRATSPAAVVGEASR) is disordered. The span at 319–337 (VPSVSRATSPAAVVGEASR) shows a compositional bias: low complexity.

It belongs to the ThiG family. In terms of assembly, homotetramer. Forms heterodimers with either ThiH or ThiS.

It localises to the cytoplasm. The catalysed reaction is [ThiS sulfur-carrier protein]-C-terminal-Gly-aminoethanethioate + 2-iminoacetate + 1-deoxy-D-xylulose 5-phosphate = [ThiS sulfur-carrier protein]-C-terminal Gly-Gly + 2-[(2R,5Z)-2-carboxy-4-methylthiazol-5(2H)-ylidene]ethyl phosphate + 2 H2O + H(+). It functions in the pathway cofactor biosynthesis; thiamine diphosphate biosynthesis. Catalyzes the rearrangement of 1-deoxy-D-xylulose 5-phosphate (DXP) to produce the thiazole phosphate moiety of thiamine. Sulfur is provided by the thiocarboxylate moiety of the carrier protein ThiS. In vitro, sulfur can be provided by H(2)S. The polypeptide is Thiazole synthase (Frankia casuarinae (strain DSM 45818 / CECT 9043 / HFP020203 / CcI3)).